Here is a 1577-residue protein sequence, read N- to C-terminus: Disco-interacting protein 2 homolog B-A (1577 aa).

Residues 7–124 form the DMAP1-binding domain; that stretch reads DLAALPKEVR…PMPTKRRSAF (118 aa). 4 disordered regions span residues 109 to 148, 173 to 204, 217 to 239, and 253 to 273; these read EEKMALPMPTKRRSAFVQSPAENCTPPDTSSASEDEGSLR, VQGSSTSSSASSTLSHGDGKTHNHNNHSQGQT, DTNSSSGSVPPDVTSTAPQDRNS, and SRGQSRSSMMDTAGGVPAHSR. Positions 124–140 are enriched in polar residues; sequence FVQSPAENCTPPDTSSA. Residues 176 to 187 are compositionally biased toward low complexity; sequence SSTSSSASSTLS. Positions 217-236 are enriched in polar residues; the sequence is DTNSSSGSVPPDVTSTAPQD.

It belongs to the DIP2 family.

The protein localises to the cell projection. It is found in the dendrite. The protein resides in the axon. It localises to the perikaryon. Negatively regulates axonal outgrowth and is essential for normal synaptic transmission. Not required for regulation of axon polarity. Promotes acetylation of alpha-tubulin. The sequence is that of Disco-interacting protein 2 homolog B-A (dip2ba) from Danio rerio (Zebrafish).